The primary structure comprises 637 residues: Dihydrolipoyllysine-residue acetyltransferase component of pyruvate dehydrogenase complex, mitochondrial (637 aa).

Residues 1–85 (MWRVCVRRAQ…LLGSPGRRSY (85 aa)) constitute a mitochondrion transit peptide. Positions 80–100 (PGRRSYSLPPHQKVPLPSLSP) are disordered. The Lipoyl-binding 1 domain occupies 90 to 166 (HQKVPLPSLS…PIGSIICITV (77 aa)). Residue Ser99 is modified to Phosphoserine. Lys131 is modified (N6-lipoyllysine). 2 disordered regions span residues 189–219 (QAAA…PPHM) and 307–340 (LKPQ…PAGP). Residues 201–211 (AAPTAPSAKAP) show a composition bias toward low complexity. Residues 218–287 (HMQVSAVGEQ…PLGAPLCIIV (70 aa)) enclose the Lipoyl-binding 2 domain. A compositionally biased stretch (pro residues) spans 310 to 321 (QAPPPVPPPVAA). Positions 322–333 (APPTAQPLAPTP) are enriched in low complexity. Residues 345-382 (FVSPLAKKLAAERGIDLTQVKGTGPEGRIIKKDIDSFV) enclose the Peripheral subunit-binding (PSBD) domain. A CoA-binding site is contributed by Arg451. N6-acetyllysine is present on Lys456. At Lys463 the chain carries N6-succinyllysine. A CoA-binding site is contributed by Ser465. An N6-succinyllysine modification is found at Lys537. CoA-binding residues include Ser556, Asn557, and Gly581. Residues His610 and Asp614 contribute to the active site.

Belongs to the 2-oxoacid dehydrogenase family. In terms of assembly, part of the pyruvate dehydrogenase complex (PDHc) that is a multi-enzyme complex composed of multiple copies of three enzymes, pyruvate dehydrogenase (subunits PDH1A and PDHB, E1 component), dihydrolipoamide acetyltransferase (DLAT, E2 component), and dihydrolipoamide dehydrogenase (DLD, E3 component) to which is added an additional protein the E3-binding protein (PDHX, E3BP). In terms of structural architecture, the E2 and E3BP components assemble into a 60meric central core with icosahedral symmetry. The central core is decorated with E1 and E3 proteins. Currently, two alternative models for the E2:E3BP stoichiometry are considered as being either 48:12 (E2(48)-E3BP(12)) or 40:20 (E2(40)-E3BP(20)). Interacts with PDK2 and PDK3. Interacts with SIRT4. Interacts with PDHB. It depends on (R)-lipoate as a cofactor. Post-translationally, delipoylated at Lys-131 by SIRT4, delipoylation decreases the PHD complex activity. As to expression, detected at higher levels in cauda epididymal spermatazoa than in caput epididymal spermatazoa (at protein level).

Its subcellular location is the mitochondrion matrix. It carries out the reaction N(6)-[(R)-dihydrolipoyl]-L-lysyl-[protein] + acetyl-CoA = N(6)-[(R)-S(8)-acetyldihydrolipoyl]-L-lysyl-[protein] + CoA. Functionally, as part of the pyruvate dehydrogenase complex, catalyzes the transfers of an acetyl group to a lipoic acid moiety. The pyruvate dehydrogenase complex, catalyzes the overall conversion of pyruvate to acetyl-CoA and CO(2), and thereby links cytoplasmic glycolysis and the mitochondrial tricarboxylic acid (TCA) cycle. The protein is Dihydrolipoyllysine-residue acetyltransferase component of pyruvate dehydrogenase complex, mitochondrial of Mesocricetus auratus (Golden hamster).